Consider the following 354-residue polypeptide: Methylthioribose-1-phosphate isomerase (354 aa).

Substrate contacts are provided by residues 48–50, Arg-95, and Gln-202; that span reads RGA. Asp-243 acts as the Proton donor in catalysis. Substrate is bound at residue 253–254; it reads NK.

The protein belongs to the eIF-2B alpha/beta/delta subunits family. MtnA subfamily.

The catalysed reaction is 5-(methylsulfanyl)-alpha-D-ribose 1-phosphate = 5-(methylsulfanyl)-D-ribulose 1-phosphate. It functions in the pathway amino-acid biosynthesis; L-methionine biosynthesis via salvage pathway; L-methionine from S-methyl-5-thio-alpha-D-ribose 1-phosphate: step 1/6. In terms of biological role, catalyzes the interconversion of methylthioribose-1-phosphate (MTR-1-P) into methylthioribulose-1-phosphate (MTRu-1-P). This chain is Methylthioribose-1-phosphate isomerase, found in Roseiflexus castenholzii (strain DSM 13941 / HLO8).